The following is a 262-amino-acid chain: (5R,7aS)-5-hydroxy-7a-methyl-1-oxo-2,3,5,6,7,7a-hexahydro-1H-indene-carboxyl-CoA reductase (262 aa).

D50, D77, V78, N104, Y170, K174, and A203 together coordinate NAD(+). The active-site Proton acceptor is the Y170.

It belongs to the short-chain dehydrogenases/reductases (SDR) family.

The catalysed reaction is (5R,7aS)-5-hydroxy-7a-methyl-1-oxo-2,3,5,6,7,7a-hexahydro-1H-indene-carboxyl-CoA + NAD(+) = (7aS)-7a-methyl-1,5-dioxo-2,3,5,6,7,7a-hexahydro-1H-indene-carboxyl-CoA + NADH + H(+). The protein operates within steroid metabolism; cholesterol degradation. Requires the presence of IpdC. Functionally, involved in the final steps of cholesterol and steroid degradation. Probably catalyzes the oxidation of the 5-OH group of (5R,7aS)-5-hydroxy-7a-methyl-1-oxo-2,3,5,6,7,7a-hexahydro-1H-indene-carboxyl-CoA, leading to the formation of HIEC-CoA. This Mycobacterium tuberculosis (strain ATCC 25618 / H37Rv) protein is (5R,7aS)-5-hydroxy-7a-methyl-1-oxo-2,3,5,6,7,7a-hexahydro-1H-indene-carboxyl-CoA reductase.